The primary structure comprises 268 residues: MTLLNVCGLSHHYAHGGFSGKHQHQAVLNNVSLTLKSGETVALLGRSGCGKSTLARLLVGLESPSQGNISWHGESLAKLNRAQRKAFRRDIQMVFQDSISAVNPRKTVREILREPMRHLLSLKKSEQLARASEMLKAVDLDDSVLDKRPPQLSGGQLQLVCLARALAVEPKLLILDEAVSNLDLVLQAGVIRLLKKLQQQFGTACLFITHDLRLVERFCQRVMVMDNGQIAETQAVGDKLTFSSDAGRVLQNAVLPAFPVRRRTSEKV.

The ABC transporter domain maps to 4 to 252 (LNVCGLSHHY…SSDAGRVLQN (249 aa)). 45-52 (GRSGCGKS) provides a ligand contact to ATP.

This sequence belongs to the ABC transporter superfamily. Nickel importer (TC 3.A.1.5.3) family. In terms of assembly, the complex is composed of two ATP-binding proteins (NikD and NikE), two transmembrane proteins (NikB and NikC) and a solute-binding protein (NikA).

It is found in the cell inner membrane. It catalyses the reaction Ni(2+)(out) + ATP + H2O = Ni(2+)(in) + ADP + phosphate + H(+). Part of the ABC transporter complex NikABCDE involved in nickel import. Responsible for energy coupling to the transport system. This is Nickel import ATP-binding protein NikE from Shigella flexneri.